The chain runs to 606 residues: Sulfite reductase [NADPH] flavoprotein alpha-component (606 aa).

The Flavodoxin-like domain maps to 68–206 (ITILSASQTG…AAEAWRKEVT (139 aa)). FMN contacts are provided by residues 74–79 (SQTGNA), 121–124 (STQG), and 157–166 (LGDITYEHFA). Residues 240-454 (ESPLTATLSV…VEHNDNFRLP (215 aa)) enclose the FAD-binding FR-type domain. Residues threonine 328, glutamine 362, 392–395 (RLYS), 410–412 (TVG), tyrosine 416, and 425–428 (GGAS) each bind FAD. Residues 525–526 (SR), 531–535 (KVYVQ), and aspartate 568 contribute to the NADP(+) site. Tyrosine 606 lines the FAD pocket.

It belongs to the NADPH-dependent sulphite reductase flavoprotein subunit CysJ family. The protein in the N-terminal section; belongs to the flavodoxin family. This sequence in the C-terminal section; belongs to the flavoprotein pyridine nucleotide cytochrome reductase family. As to quaternary structure, alpha(8)-beta(8). The alpha component is a flavoprotein, the beta component is a hemoprotein. FAD is required as a cofactor. The cofactor is FMN.

It catalyses the reaction hydrogen sulfide + 3 NADP(+) + 3 H2O = sulfite + 3 NADPH + 4 H(+). It participates in sulfur metabolism; hydrogen sulfide biosynthesis; hydrogen sulfide from sulfite (NADPH route): step 1/1. Component of the sulfite reductase complex that catalyzes the 6-electron reduction of sulfite to sulfide. This is one of several activities required for the biosynthesis of L-cysteine from sulfate. The flavoprotein component catalyzes the electron flow from NADPH -&gt; FAD -&gt; FMN to the hemoprotein component. The protein is Sulfite reductase [NADPH] flavoprotein alpha-component of Zymomonas mobilis subsp. mobilis (strain ATCC 31821 / ZM4 / CP4).